The chain runs to 303 residues: Uricase (303 aa).

Ala2 is modified (N-acetylalanine). N6-acetyllysine; alternate occurs at positions 10 and 23. 2 positions are modified to N6-succinyllysine; alternate: Lys10 and Lys23. Lys23 functions as the Charge relay system in the catalytic mechanism. Lys27 and Lys36 each carry N6-acetyllysine. Residues Ser39 and Ser63 each carry the phosphoserine modification. Thr68 acts as the Charge relay system in catalysis. Urate is bound by residues Thr68 and Asp69. N6-acetyllysine is present on residues Lys118, Lys122, and Lys164. Phe170 contacts urate. N6-acetyllysine is present on residues Lys175 and Lys185. Arg187 contributes to the urate binding site. Residues Lys220 and Lys227 each carry the N6-acetyllysine; alternate modification. Lys220 and Lys227 each carry N6-succinyllysine; alternate. Ser231 is subject to Phosphoserine. Urate is bound by residues Val234, Gln235, and Asn261. Residue His263 is the Charge relay system of the active site. Lys277 bears the N6-acetyllysine mark. Tyr288 bears the Phosphotyrosine mark. The Microbody targeting signal motif lies at 301-303 (SRL).

The protein belongs to the uricase family. Acetylation of Lys-118, Lys-164 and Lys-290 is observed in liver mitochondria from fasted mice but not from fed mice. May be deacetylated by Sirt5; however it is unclear whether Sirt5 mediates deacetylation or desuccinylation of Uox; additional evidence is required to validate these results.

It localises to the peroxisome. The protein localises to the mitochondrion. The catalysed reaction is urate + O2 + H2O = 5-hydroxyisourate + H2O2. Its pathway is purine metabolism; urate degradation; (S)-allantoin from urate: step 1/3. Catalyzes the oxidation of uric acid to 5-hydroxyisourate, which is further processed to form (S)-allantoin. The chain is Uricase (Uox) from Mus musculus (Mouse).